The sequence spans 660 residues: Bifunctional polymyxin resistance protein ArnA (660 aa).

Residues 1 to 304 (MKAIVFAYHD…EMGIVTDVRL (304 aa)) are formyltransferase ArnAFT. Histidine 104 acts as the Proton donor; for formyltransferase activity in catalysis. Residues arginine 114 and 136-140 (VKRPD) contribute to the (6R)-10-formyltetrahydrofolate site. Residues 314 to 660 (RRTRVLILGV…RTTVQEGDGA (347 aa)) form a dehydrogenase ArnADH region. NAD(+) contacts are provided by residues aspartate 347 and 368 to 369 (DI). UDP-alpha-D-glucuronate contacts are provided by residues alanine 393, tyrosine 398, and 432 to 433 (TS). Glutamate 434 acts as the Proton acceptor; for decarboxylase activity in catalysis. UDP-alpha-D-glucuronate-binding positions include arginine 460, asparagine 492, 526–535 (KLMDGGAQKR), and tyrosine 613. The Proton donor; for decarboxylase activity role is filled by arginine 619.

This sequence in the N-terminal section; belongs to the Fmt family. UDP-L-Ara4N formyltransferase subfamily. In the C-terminal section; belongs to the NAD(P)-dependent epimerase/dehydratase family. UDP-glucuronic acid decarboxylase subfamily. Homohexamer, formed by a dimer of trimers.

It carries out the reaction UDP-alpha-D-glucuronate + NAD(+) = UDP-beta-L-threo-pentopyranos-4-ulose + CO2 + NADH. The catalysed reaction is UDP-4-amino-4-deoxy-beta-L-arabinose + (6R)-10-formyltetrahydrofolate = UDP-4-deoxy-4-formamido-beta-L-arabinose + (6S)-5,6,7,8-tetrahydrofolate + H(+). The protein operates within nucleotide-sugar biosynthesis; UDP-4-deoxy-4-formamido-beta-L-arabinose biosynthesis; UDP-4-deoxy-4-formamido-beta-L-arabinose from UDP-alpha-D-glucuronate: step 1/3. It functions in the pathway nucleotide-sugar biosynthesis; UDP-4-deoxy-4-formamido-beta-L-arabinose biosynthesis; UDP-4-deoxy-4-formamido-beta-L-arabinose from UDP-alpha-D-glucuronate: step 3/3. Its pathway is bacterial outer membrane biogenesis; lipopolysaccharide biosynthesis. Functionally, bifunctional enzyme that catalyzes the oxidative decarboxylation of UDP-glucuronic acid (UDP-GlcUA) to UDP-4-keto-arabinose (UDP-Ara4O) and the addition of a formyl group to UDP-4-amino-4-deoxy-L-arabinose (UDP-L-Ara4N) to form UDP-L-4-formamido-arabinose (UDP-L-Ara4FN). The modified arabinose is attached to lipid A and is required for resistance to polymyxin and cationic antimicrobial peptides. This Serratia proteamaculans (strain 568) protein is Bifunctional polymyxin resistance protein ArnA.